The chain runs to 349 residues: Zinc-type alcohol dehydrogenase-like protein PB24D3.08c (349 aa).

Belongs to the zinc-containing alcohol dehydrogenase family. Quinone oxidoreductase subfamily.

It localises to the cytoplasm. Its subcellular location is the nucleus. The chain is Zinc-type alcohol dehydrogenase-like protein PB24D3.08c from Schizosaccharomyces pombe (strain 972 / ATCC 24843) (Fission yeast).